Here is a 208-residue protein sequence, read N- to C-terminus: Large ribosomal subunit protein uL4 (208 aa).

Residues 46–84 form a disordered region; it reads QGTHKAKTRAEVRGGGRKPFRQKGTGNARQGSTRSPLMI. The segment covering 69–80 has biased composition (polar residues); that stretch reads GTGNARQGSTRS.

The protein belongs to the universal ribosomal protein uL4 family. Part of the 50S ribosomal subunit.

In terms of biological role, one of the primary rRNA binding proteins, this protein initially binds near the 5'-end of the 23S rRNA. It is important during the early stages of 50S assembly. It makes multiple contacts with different domains of the 23S rRNA in the assembled 50S subunit and ribosome. Forms part of the polypeptide exit tunnel. The chain is Large ribosomal subunit protein uL4 from Chlorobium limicola (strain DSM 245 / NBRC 103803 / 6330).